The primary structure comprises 144 residues: MNSNKSRGSSVERYIVSRLRDKGFAVIRAPASGSKRKDHVPDIIALKSGVIILIEVKSRKNGQKIYIEKEQAEGIREFAKRSGGELFLGVKLPKMLRFIKFDMLRQTEGGNYAIDLETVEKGMELEDLVRYVESKISRTLDSFL.

Mg(2+) is bound at residue Glu12. The active site involves Ser32. 2 residues coordinate Mg(2+): Asp42 and Glu55.

The protein belongs to the Holliday junction resolvase Hjc family. Homodimer; forms a 2:1 complex with Hel308 (Hjm). May form a complex with Holliday junction DNA, Hjc and Hjm. The cofactor is Mg(2+).

It carries out the reaction Endonucleolytic cleavage at a junction such as a reciprocal single-stranded crossover between two homologous DNA duplexes (Holliday junction).. Cleavage stimulated by PCNA123 and PCNA323 and by RadC2. In terms of biological role, a structure-specific endonuclease that resolves Holliday junction (HJ) intermediates during genetic recombination. Cleaves 4-way DNA junctions introducing paired nicks in opposing strands, leaving a 5'-terminal phosphate and a 3'-terminal hydroxyl group that are subsequently ligated to produce recombinant products. Inhibits the helicase activity of Hel308 (Hjm). This Sulfurisphaera tokodaii (strain DSM 16993 / JCM 10545 / NBRC 100140 / 7) (Sulfolobus tokodaii) protein is Crossover junction endodeoxyribonuclease Hjc.